The primary structure comprises 249 residues: Triosephosphate isomerase (249 aa).

9 to 11 (NWK) provides a ligand contact to substrate. The active-site Electrophile is the histidine 94. Residue glutamate 166 is the Proton acceptor of the active site. Substrate is bound by residues glycine 172, serine 211, and 232-233 (GG).

The protein belongs to the triosephosphate isomerase family. As to quaternary structure, homodimer.

It localises to the cytoplasm. The catalysed reaction is D-glyceraldehyde 3-phosphate = dihydroxyacetone phosphate. It functions in the pathway carbohydrate biosynthesis; gluconeogenesis. Its pathway is carbohydrate degradation; glycolysis; D-glyceraldehyde 3-phosphate from glycerone phosphate: step 1/1. Its function is as follows. Involved in the gluconeogenesis. Catalyzes stereospecifically the conversion of dihydroxyacetone phosphate (DHAP) to D-glyceraldehyde-3-phosphate (G3P). The chain is Triosephosphate isomerase from Moorella thermoacetica (strain ATCC 39073 / JCM 9320).